Consider the following 427-residue polypeptide: Glutamate-1-semialdehyde 2,1-aminomutase 2 (427 aa).

Lys267 is subject to N6-(pyridoxal phosphate)lysine.

It belongs to the class-III pyridoxal-phosphate-dependent aminotransferase family. HemL subfamily. As to quaternary structure, homodimer. Pyridoxal 5'-phosphate is required as a cofactor.

It is found in the cytoplasm. It carries out the reaction (S)-4-amino-5-oxopentanoate = 5-aminolevulinate. Its pathway is porphyrin-containing compound metabolism; protoporphyrin-IX biosynthesis; 5-aminolevulinate from L-glutamyl-tRNA(Glu): step 2/2. In Staphylococcus haemolyticus (strain JCSC1435), this protein is Glutamate-1-semialdehyde 2,1-aminomutase 2.